The primary structure comprises 374 residues: uncharacterized protein (374 aa).

The N-terminal stretch at Met1–Arg26 is a signal peptide.

This is an uncharacterized protein from Treponema pallidum (strain Nichols).